Consider the following 114-residue polypeptide: Flagellar hook-basal body complex protein FliE (114 aa).

Belongs to the FliE family.

It localises to the bacterial flagellum basal body. This is Flagellar hook-basal body complex protein FliE from Desulfitobacterium hafniense (strain Y51).